The sequence spans 227 residues: Ribose-5-phosphate isomerase A (227 aa).

Residues 26-29 (TGST), 82-85 (DGAD), and 95-98 (KGGG) contribute to the substrate site. The active-site Proton acceptor is Glu-104. Lys-122 contributes to the substrate binding site.

The protein belongs to the ribose 5-phosphate isomerase family. Homodimer.

It carries out the reaction aldehydo-D-ribose 5-phosphate = D-ribulose 5-phosphate. Its pathway is carbohydrate degradation; pentose phosphate pathway; D-ribose 5-phosphate from D-ribulose 5-phosphate (non-oxidative stage): step 1/1. In terms of biological role, catalyzes the reversible conversion of ribose-5-phosphate to ribulose 5-phosphate. The protein is Ribose-5-phosphate isomerase A of Streptococcus pneumoniae (strain Hungary19A-6).